A 197-amino-acid chain; its full sequence is Phosphoheptose isomerase (197 aa).

Residues 36 to 197 (MTASLMNNGK…IDCLLLGVEE (162 aa)) enclose the SIS domain. Residue 51–53 (NGG) participates in substrate binding. Residues His-60 and Glu-64 each contribute to the Zn(2+) site. Substrate-binding positions include Glu-64, 93-94 (ND), 119-121 (STS), Ser-124, and Gln-174. The Zn(2+) site is built by Gln-174 and His-182.

Belongs to the SIS family. GmhA subfamily. Homotetramer. It depends on Zn(2+) as a cofactor.

The protein resides in the cytoplasm. It carries out the reaction 2 D-sedoheptulose 7-phosphate = D-glycero-alpha-D-manno-heptose 7-phosphate + D-glycero-beta-D-manno-heptose 7-phosphate. The protein operates within carbohydrate biosynthesis; D-glycero-D-manno-heptose 7-phosphate biosynthesis; D-glycero-alpha-D-manno-heptose 7-phosphate and D-glycero-beta-D-manno-heptose 7-phosphate from sedoheptulose 7-phosphate: step 1/1. Catalyzes the isomerization of sedoheptulose 7-phosphate in D-glycero-D-manno-heptose 7-phosphate. This is Phosphoheptose isomerase from Azoarcus sp. (strain BH72).